The primary structure comprises 117 residues: Structural toxin peptide sea anemone type 9a (117 aa).

The N-terminal stretch at 1–23 (MKTIIAIFSLAAMIVLVRPTPLE) is a signal peptide. 3 tandem repeats follow at residues 28–56 (TRSI…GCQE), 57–88 (KRNI…NEAV), and 89–117 (KRAI…HGCS). The tract at residues 29-117 (RSIINVPCKK…GKCRKIHGCS (89 aa)) is 3 X approximate tandem repeats.

Post-translationally, contains 6 disulfide bonds. Expressed outside of acontia.

It localises to the secreted. The protein localises to the nematocyst. Functionally, putative neurotoxin. The sequence is that of Structural toxin peptide sea anemone type 9a from Calliactis polypus (Hermit crab anemone).